The chain runs to 826 residues: E3 ubiquitin-protein ligase SH3RF1 (826 aa).

Residues 12 to 53 (CPVCLERLDASAKVLPCQHTFCKRCLLGIVSSRKELRCPECR) form an RING-type zinc finger. The interval 80-130 (PRKAGDGGSAGNSTNALRAQGSVTTNGGLNDAQNTQSGQQRIQARSPPVRG) is disordered. Over residues 90 to 122 (GNSTNALRAQGSVTTNGGLNDAQNTQSGQQRIQ) the composition is skewed to polar residues. SH3 domains are found at residues 132-191 (PQLP…IIKP) and 194-257 (QPPP…FNSA). The interval 266 to 319 (KPSGADTGEGSSGTSHSGNSQKQADAKKNTKKRHSFTSLTMSNKSSQSVQNRHS) is disordered. Positions 273–285 (GEGSSGTSHSGNS) are enriched in low complexity. The span at 301–317 (FTSLTMSNKSSQSVQNR) shows a compositional bias: polar residues. The region spanning 398–459 (ARPSVFIAIY…PGNYVAPVTR (62 aa)) is the SH3 3 domain. Disordered regions lie at residues 647–694 (NSAA…QTNS) and 725–759 (DSVSASTPAQDNRKPASLDNNIPIAPPPRQPCSSL). Residues 652–663 (KQDKDSKKEKKG) are compositionally biased toward basic and acidic residues. The region spanning 767–826 (RPCERYRVMVSYPPQSEAELELKEGDIVFVHKKREDGWFKGTLQRNGKTGLFPGSFVENI) is the SH3 4 domain.

This sequence belongs to the SH3RF family. Autoubiquitinated. Ubiquitinated by SH3RF2, leading to proteasome-mediated degradation.

It is found in the cytoplasm. The protein resides in the perinuclear region. Its subcellular location is the cell projection. It localises to the lamellipodium. The protein localises to the golgi apparatus. It is found in the trans-Golgi network. It carries out the reaction S-ubiquitinyl-[E2 ubiquitin-conjugating enzyme]-L-cysteine + [acceptor protein]-L-lysine = [E2 ubiquitin-conjugating enzyme]-L-cysteine + N(6)-ubiquitinyl-[acceptor protein]-L-lysine.. It functions in the pathway protein modification; protein ubiquitination. Functionally, has E3 ubiquitin-protein ligase activity. In the absence of an external substrate, it can catalyze self-ubiquitination. Acts as a scaffold protein that contributes to the effective activation of the JNK signaling pathway. Plays an essential role in the anterior neural development. The chain is E3 ubiquitin-protein ligase SH3RF1 (sh3rf1) from Xenopus laevis (African clawed frog).